Consider the following 1276-residue polypeptide: cGMP-specific 3',5'-cyclic phosphodiesterase (1276 aa).

3 disordered regions span residues 1–76 (MHEL…TAAG), 91–185 (NQVK…QQDV), and 241–260 (ASPT…SASS). 2 stretches are compositionally biased toward low complexity: residues 12–47 (SSSS…SSAS) and 57–76 (TSTA…TAAG). Residues 109 to 124 (APYPPVPAAKPKPTPT) are compositionally biased toward pro residues. Residues 129–140 (SKFKSTSREVDV) are compositionally biased toward basic and acidic residues. The segment covering 147 to 166 (ARSSTISPGVSIHTQTIQQE) has biased composition (polar residues). Low complexity-rich tracts occupy residues 167–180 (SSSA…SSSS) and 249–260 (SPRSLSNSSASS). GAF domains are found at residues 290–442 (DIDV…GIGI) and 474–658 (NLEC…GLGI). Residues 688-1119 (SQDQTEKLTQ…RNWQDLAEKV (432 aa)) enclose the PDEase domain. Histidine 764 serves as the catalytic Proton donor. A divalent metal cation contacts are provided by histidine 768, histidine 804, aspartate 805, and aspartate 1023. 2 disordered regions span residues 1162-1193 (AQHG…TGAL) and 1205-1276 (LYNS…CSLL). Basic and acidic residues-rich tracts occupy residues 1171-1180 (DDSHTPEHQR) and 1221-1233 (LESH…DDKS). Positions 1248–1263 (GRMSASSSTSSAGTVV) are enriched in low complexity. Over residues 1266–1276 (SKKRSKLCSLL) the composition is skewed to basic residues. Cysteine 1273 is modified (cysteine methyl ester). Cysteine 1273 carries S-farnesyl cysteine lipidation. Positions 1274-1276 (SLL) are cleaved as a propeptide — removed in mature form.

It belongs to the cyclic nucleotide phosphodiesterase family. In terms of assembly, interacts with PrBP. A divalent metal cation serves as cofactor.

Its subcellular location is the cell membrane. The catalysed reaction is 3',5'-cyclic GMP + H2O = GMP + H(+). In terms of biological role, has a role regulating cGMP transport in Malpighian tubule principal cells. In Drosophila persimilis (Fruit fly), this protein is cGMP-specific 3',5'-cyclic phosphodiesterase.